Reading from the N-terminus, the 387-residue chain is Homoserine O-succinyltransferase (387 aa).

The 310-residue stretch at 49 to 358 folds into the AB hydrolase-1 domain; sequence NAILICHALS…DAEQGHDSFL (310 aa). The active-site Nucleophile is the S156. Substrate is bound at residue R226. Residues D321 and H354 contribute to the active site. D355 contributes to the substrate binding site.

This sequence belongs to the AB hydrolase superfamily. MetX family. As to quaternary structure, homodimer.

The protein localises to the cytoplasm. The enzyme catalyses L-homoserine + succinyl-CoA = O-succinyl-L-homoserine + CoA. The protein operates within amino-acid biosynthesis; L-methionine biosynthesis via de novo pathway; O-succinyl-L-homoserine from L-homoserine: step 1/1. Requires MetW for activity. Transfers a succinyl group from succinyl-CoA to L-homoserine, forming succinyl-L-homoserine. The polypeptide is Homoserine O-succinyltransferase (Acinetobacter baylyi (strain ATCC 33305 / BD413 / ADP1)).